We begin with the raw amino-acid sequence, 172 residues long: S-ribosylhomocysteine lyase (172 aa).

Residues His54, His58, and Cys128 each contribute to the Fe cation site.

It belongs to the LuxS family. In terms of assembly, homodimer. It depends on Fe cation as a cofactor.

The enzyme catalyses S-(5-deoxy-D-ribos-5-yl)-L-homocysteine = (S)-4,5-dihydroxypentane-2,3-dione + L-homocysteine. Functionally, involved in the synthesis of autoinducer 2 (AI-2) which is secreted by bacteria and is used to communicate both the cell density and the metabolic potential of the environment. The regulation of gene expression in response to changes in cell density is called quorum sensing. Catalyzes the transformation of S-ribosylhomocysteine (RHC) to homocysteine (HC) and 4,5-dihydroxy-2,3-pentadione (DPD). This chain is S-ribosylhomocysteine lyase, found in Vibrio parahaemolyticus serotype O3:K6 (strain RIMD 2210633).